The primary structure comprises 62 residues: Paralithocin 1 (62 aa).

The first 23 residues, 1 to 23, serve as a signal peptide directing secretion; that stretch reads MGPMKVLLVLLVVMVAAPHIADA. 4 cysteine pairs are disulfide-bonded: C29–C55, C33–C51, C37–C49, and C42–C52. Tyrosine amide; partial is present on Y61.

The protein belongs to the paralithocin family. Post-translationally, the amidated form is probably the active form.

Has weak antibacterial activity, mainly against marine Gram-positive bacteria like C.maltaromaticum (MIC=200 uM), C.mobile (MIC=100 uM), C.divergens (MIC=200 uM) and C.funditum (MIC=200 uM) but also against C.glutamicum (MIC=50 uM). Has very little or no activity against Gram-negative bacteria. This is Paralithocin 1 from Paralithodes camtschaticus (Red king crab).